We begin with the raw amino-acid sequence, 418 residues long: Voltage-gated ClC-type chloride channel ClcB (418 aa).

A run of 10 helical transmembrane segments spans residues 5 to 25, 54 to 74, 146 to 166, 168 to 188, 222 to 242, 258 to 278, 291 to 311, 316 to 336, 352 to 372, and 380 to 400; these read LLIA…FRHA, LLTP…WQKF, LWIA…PLAG, LFIA…PVII, ALII…LTLM, WQLA…PAVW, APPL…AVLA, GAPG…GMLY, LLLG…APIM, and MTGE…ASVI.

Belongs to the chloride channel (TC 2.A.49) family. ClcB subfamily.

Its subcellular location is the cell inner membrane. In terms of biological role, probably acts as an electrical shunt for an outwardly-directed proton pump that is linked to amino acid decarboxylation, as part of the extreme acid resistance (XAR) response. The polypeptide is Voltage-gated ClC-type chloride channel ClcB (Escherichia coli (strain ATCC 8739 / DSM 1576 / NBRC 3972 / NCIMB 8545 / WDCM 00012 / Crooks)).